Consider the following 69-residue polypeptide: DNA gyrase inhibitor YacG (69 aa).

Zn(2+)-binding residues include Cys-7, Cys-10, Cys-26, and Cys-30.

Belongs to the DNA gyrase inhibitor YacG family. Interacts with GyrB. It depends on Zn(2+) as a cofactor.

Its function is as follows. Inhibits all the catalytic activities of DNA gyrase by preventing its interaction with DNA. Acts by binding directly to the C-terminal domain of GyrB, which probably disrupts DNA binding by the gyrase. The protein is DNA gyrase inhibitor YacG of Shewanella sp. (strain W3-18-1).